The primary structure comprises 233 residues: DnaA regulatory inactivator Hda (233 aa).

Belongs to the DnaA family. HdA subfamily. In terms of assembly, the active form seems to be an ADP-bound monomer. Forms the RIDA complex (regulatory inactivation of DnaA) of ATP-DnaA, ADP-Hda and the DNA-loaded beta sliding clamp (dnaN).

Mediates the interaction of DNA replication initiator protein DnaA with DNA polymerase subunit beta sliding clamp (dnaN). Stimulates hydrolysis of ATP-DnaA to ADP-DnaA, rendering DnaA inactive for reinitiation, a process called regulatory inhibition of DnaA or RIDA. The polypeptide is DnaA regulatory inactivator Hda (Escherichia fergusonii (strain ATCC 35469 / DSM 13698 / CCUG 18766 / IAM 14443 / JCM 21226 / LMG 7866 / NBRC 102419 / NCTC 12128 / CDC 0568-73)).